Consider the following 239-residue polypeptide: Glutathione S-transferase verG (239 aa).

The GST N-terminal domain occupies 18-101; the sequence is KPLIFVMEGR…YLSNKYDAKR (84 aa). The 131-residue stretch at 107–237 folds into the GST C-terminal domain; that stretch reads NAAENLEICN…ELDSRKEIAI (131 aa).

Belongs to the GST superfamily.

It catalyses the reaction RX + glutathione = an S-substituted glutathione + a halide anion + H(+). It functions in the pathway mycotoxin biosynthesis. Functionally, glutathione S-transferase; part of the gene cluster that mediates the biosynthesis of 11'-deoxyverticillin A, one of the dimeric epipolythiodioxopiperazines (ETPs) from the verticillin family that act as mycotoxins. 11'-deoxyverticillin A is required for normal conidiation. The nonribosomal peptide synthetase verP is speculated to be responsible for condensation of amino acids to form the carbon skeleton of verticillin, whereas the cluster-specific tailoring enzymes are involved in further modifications leading to the production of 11'-deoxyverticillin A. The chain is Glutathione S-transferase verG from Clonostachys rogersoniana.